We begin with the raw amino-acid sequence, 338 residues long: N-acetyl-gamma-glutamyl-phosphate reductase (338 aa).

C148 is a catalytic residue.

The protein belongs to the NAGSA dehydrogenase family. Type 1 subfamily.

Its subcellular location is the cytoplasm. The enzyme catalyses N-acetyl-L-glutamate 5-semialdehyde + phosphate + NADP(+) = N-acetyl-L-glutamyl 5-phosphate + NADPH + H(+). Its pathway is amino-acid biosynthesis; L-arginine biosynthesis; N(2)-acetyl-L-ornithine from L-glutamate: step 3/4. Its function is as follows. Catalyzes the NADPH-dependent reduction of N-acetyl-5-glutamyl phosphate to yield N-acetyl-L-glutamate 5-semialdehyde. The polypeptide is N-acetyl-gamma-glutamyl-phosphate reductase (Leptospira interrogans serogroup Icterohaemorrhagiae serovar Lai (strain 56601)).